We begin with the raw amino-acid sequence, 201 residues long: Imidazole glycerol phosphate synthase subunit HisH 1 (201 aa).

The region spanning 1-201 (MIALIDYKAG…LKLLENFIRL (201 aa)) is the Glutamine amidotransferase type-1 domain. Cys-80 serves as the catalytic Nucleophile. Active-site residues include His-183 and Glu-185.

In terms of assembly, heterodimer of HisH and HisF.

It is found in the cytoplasm. The catalysed reaction is 5-[(5-phospho-1-deoxy-D-ribulos-1-ylimino)methylamino]-1-(5-phospho-beta-D-ribosyl)imidazole-4-carboxamide + L-glutamine = D-erythro-1-(imidazol-4-yl)glycerol 3-phosphate + 5-amino-1-(5-phospho-beta-D-ribosyl)imidazole-4-carboxamide + L-glutamate + H(+). It carries out the reaction L-glutamine + H2O = L-glutamate + NH4(+). It functions in the pathway amino-acid biosynthesis; L-histidine biosynthesis; L-histidine from 5-phospho-alpha-D-ribose 1-diphosphate: step 5/9. Functionally, IGPS catalyzes the conversion of PRFAR and glutamine to IGP, AICAR and glutamate. The HisH subunit provides the glutamine amidotransferase activity that produces the ammonia necessary to HisF for the synthesis of IGP and AICAR. The polypeptide is Imidazole glycerol phosphate synthase subunit HisH 1 (Campylobacter jejuni (strain RM1221)).